Here is a 112-residue protein sequence, read N- to C-terminus: uncharacterized protein (112 aa).

Disordered regions lie at residues 1–53 and 80–112; these read MSKL…QRLK and MINQKRETKKRKRKQKKKNDDDYGVFEEDMLEL. Residues 8–22 show a composition bias toward polar residues; sequence SALQKLIESQKNPNA. Residues 86-96 show a composition bias toward basic residues; it reads ETKKRKRKQKK. A compositionally biased stretch (acidic residues) spans 101–112; that stretch reads DYGVFEEDMLEL.

It is found in the nucleus. The protein localises to the nucleolus. This is an uncharacterized protein from Schizosaccharomyces pombe (strain 972 / ATCC 24843) (Fission yeast).